Consider the following 422-residue polypeptide: UDP-N-acetylglucosamine 1-carboxyvinyltransferase (422 aa).

A phosphoenolpyruvate-binding site is contributed by 23-24; the sequence is KN. R92 is a binding site for UDP-N-acetyl-alpha-D-glucosamine. C116 acts as the Proton donor in catalysis. C116 bears the 2-(S-cysteinyl)pyruvic acid O-phosphothioketal mark. Residues 121–125, 161–165, D306, and I328 contribute to the UDP-N-acetyl-alpha-D-glucosamine site; these read RPVDL and KVSVG.

The protein belongs to the EPSP synthase family. MurA subfamily.

It localises to the cytoplasm. The enzyme catalyses phosphoenolpyruvate + UDP-N-acetyl-alpha-D-glucosamine = UDP-N-acetyl-3-O-(1-carboxyvinyl)-alpha-D-glucosamine + phosphate. The protein operates within cell wall biogenesis; peptidoglycan biosynthesis. In terms of biological role, cell wall formation. Adds enolpyruvyl to UDP-N-acetylglucosamine. This is UDP-N-acetylglucosamine 1-carboxyvinyltransferase from Aliivibrio fischeri (strain MJ11) (Vibrio fischeri).